The following is a 256-amino-acid chain: Nuclear shuttle protein (256 aa).

The interval 1-53 is disordered; it reads MYPSRNKRGSYFNQRRQYSRNHVWKRPTAAKRHDWKRRPSNTSKPNDEPKMSA. The span at 17-39 shows a compositional bias: basic residues; that stretch reads QYSRNHVWKRPTAAKRHDWKRRP. The Bipartite nuclear localization signal signature appears at 21–42; the sequence is NHVWKRPTAAKRHDWKRRPSNT. Residues 81-96 carry the Nuclear localization signal motif; sequence DLGRSEPNRSRSYIRL. The interval 150–187 is interaction with Arabidopsis thaliana NSI protein; the sequence is ELFGARIHSHGNLSVTPALKDRYYIRHVCKRVLSVEKD.

The protein belongs to the begomovirus nuclear shuttle protein family. In terms of assembly, binds to single-stranded and double-stranded viral DNA. Interacts with the host nuclear shuttle interacting (NSI) protein. This interaction may allow NSP to recruit NSI monomers to the viral genome and thus regulate nuclear export of viral genome by NSP.

It is found in the host nucleus. The protein resides in the host cytoplasm. It localises to the host cell membrane. Its function is as follows. Binds to the genomic viral ssDNA, shuttles it into and out of the cell nucleus. Begomoviruses use 2 proteins to transport their DNA from cell to cell. The nuclear shuttle protein (NSP) shuttles it between nucleus and cytoplasm and the movement protein (MP) probably transports the DNA-NSP complex to the cell periphery and facilitates movement across the cell wall. In Abutilon mosaic virus (isolate West India) (AbMV), this protein is Nuclear shuttle protein.